A 364-amino-acid polypeptide reads, in one-letter code: Aminomethyltransferase (364 aa).

This sequence belongs to the GcvT family. As to quaternary structure, the glycine cleavage system is composed of four proteins: P, T, L and H.

It catalyses the reaction N(6)-[(R)-S(8)-aminomethyldihydrolipoyl]-L-lysyl-[protein] + (6S)-5,6,7,8-tetrahydrofolate = N(6)-[(R)-dihydrolipoyl]-L-lysyl-[protein] + (6R)-5,10-methylene-5,6,7,8-tetrahydrofolate + NH4(+). The glycine cleavage system catalyzes the degradation of glycine. The sequence is that of Aminomethyltransferase from Salmonella arizonae (strain ATCC BAA-731 / CDC346-86 / RSK2980).